We begin with the raw amino-acid sequence, 130 residues long: ATP synthase epsilon chain (130 aa).

Belongs to the ATPase epsilon chain family. In terms of assembly, F-type ATPases have 2 components, CF(1) - the catalytic core - and CF(0) - the membrane proton channel. CF(1) has five subunits: alpha(3), beta(3), gamma(1), delta(1), epsilon(1). CF(0) has three main subunits: a, b and c.

It localises to the cell inner membrane. Functionally, produces ATP from ADP in the presence of a proton gradient across the membrane. This Campylobacter lari (strain RM2100 / D67 / ATCC BAA-1060) protein is ATP synthase epsilon chain.